We begin with the raw amino-acid sequence, 94 residues long: Large ribosomal subunit protein bL25 (94 aa).

It belongs to the bacterial ribosomal protein bL25 family. Part of the 50S ribosomal subunit; part of the 5S rRNA/L5/L18/L25 subcomplex. Contacts the 5S rRNA. Binds to the 5S rRNA independently of L5 and L18.

In terms of biological role, this is one of the proteins that binds to the 5S RNA in the ribosome where it forms part of the central protuberance. This Citrobacter koseri (strain ATCC BAA-895 / CDC 4225-83 / SGSC4696) protein is Large ribosomal subunit protein bL25.